The primary structure comprises 57 residues: uncharacterized protein (57 aa).

Residues 34-54 (AALLDAAALVVIPGLLTAAAV) traverse the membrane as a helical segment.

The protein localises to the membrane. This is an uncharacterized protein from Dictyostelium discoideum (Social amoeba).